Here is a 174-residue protein sequence, read N- to C-terminus: MTTIVSVRRNNQVVIAGDGQVSLGNTVMKGNAKKVRRLYHNKVLAGFAGGTADAFTLFERFEAKLEMHQGHLMKAAVEMAKDWRSDKMLRKLEALLAVADDTCSLIITGNGDVVQPENDLIAIGSGGNFAQSAATALLENTELTALEIAEKSLTIAGDICVFTNQFKTIEELNY.

Residue threonine 2 is part of the active site. 3 residues coordinate Na(+): glycine 157, cysteine 160, and threonine 163.

This sequence belongs to the peptidase T1B family. HslV subfamily. A double ring-shaped homohexamer of HslV is capped on each side by a ring-shaped HslU homohexamer. The assembly of the HslU/HslV complex is dependent on binding of ATP.

Its subcellular location is the cytoplasm. The catalysed reaction is ATP-dependent cleavage of peptide bonds with broad specificity.. Its activity is regulated as follows. Allosterically activated by HslU binding. Its function is as follows. Protease subunit of a proteasome-like degradation complex believed to be a general protein degrading machinery. In Shewanella woodyi (strain ATCC 51908 / MS32), this protein is ATP-dependent protease subunit HslV.